The chain runs to 81 residues: Acyl carrier protein (81 aa).

The Carrier domain occupies 2–77; sequence ASVEEKVKQI…DAVDYITAHA (76 aa). An O-(pantetheine 4'-phosphoryl)serine modification is found at S37.

The protein belongs to the acyl carrier protein (ACP) family. Post-translationally, 4'-phosphopantetheine is transferred from CoA to a specific serine of apo-ACP by AcpS. This modification is essential for activity because fatty acids are bound in thioester linkage to the sulfhydryl of the prosthetic group.

The protein resides in the cytoplasm. Its pathway is lipid metabolism; fatty acid biosynthesis. Carrier of the growing fatty acid chain in fatty acid biosynthesis. The chain is Acyl carrier protein from Koribacter versatilis (strain Ellin345).